Reading from the N-terminus, the 134-residue chain is uncharacterized protein (134 aa).

The next 3 helical transmembrane spans lie at 8–28 (FTSL…TVMY), 54–74 (GFQA…TFLL), and 113–133 (LACF…RLVD).

It belongs to the cornichon family.

The protein localises to the endoplasmic reticulum membrane. This is an uncharacterized protein from Schizosaccharomyces pombe (strain 972 / ATCC 24843) (Fission yeast).